The following is a 159-amino-acid chain: Phosphopantetheine adenylyltransferase (159 aa).

Thr-10 contacts substrate. ATP-binding positions include 10–11 and His-18; that span reads TF. Positions 42, 74, and 88 each coordinate substrate. ATP is bound by residues 89–91, Glu-99, and 124–130; these read GLR and WSFISSS.

Belongs to the bacterial CoaD family. Homohexamer. Mg(2+) serves as cofactor.

It localises to the cytoplasm. The catalysed reaction is (R)-4'-phosphopantetheine + ATP + H(+) = 3'-dephospho-CoA + diphosphate. Its pathway is cofactor biosynthesis; coenzyme A biosynthesis; CoA from (R)-pantothenate: step 4/5. Functionally, reversibly transfers an adenylyl group from ATP to 4'-phosphopantetheine, yielding dephospho-CoA (dPCoA) and pyrophosphate. The sequence is that of Phosphopantetheine adenylyltransferase from Salmonella arizonae (strain ATCC BAA-731 / CDC346-86 / RSK2980).